The sequence spans 497 residues: Nucleoside transporter 1 (497 aa).

Topologically, residues 1–26 (MSLKGGTAAPAPMAPPRKWYDMTSAE) are cytoplasmic. The chain crosses the membrane as a helical span at residues 27 to 47 (FYVYVVAFMCGISIMMPINAV). Residues 48 to 77 (FSAPSYMLEYYLYATKDPFLVPKMTNFWTN) lie on the Extracellular side of the membrane. Residues 78–98 (VMTYYNLISMVTSLVVEPLTL) traverse the membrane as a helical segment. Residues 99–107 (LKSFRKIPM) are Cytoplasmic-facing. A helical transmembrane segment spans residues 108-128 (LVRLLGGLSVLIIEIIVLMVV). Over 129–135 (PARGTTE) the chain is Extracellular. The helical transmembrane segment at 136–156 (AGAVATMCIAGFIGGLGTSIF) threads the bilayer. The Cytoplasmic segment spans residues 157-172 (ESTVYGMFGAFPPSFT). The chain crosses the membrane as a helical span at residues 173–193 (SIMMGGVGISGVLTSLIQIIV). Residues 194-208 (KAALPDTYEGVKKQS) lie on the Extracellular side of the membrane. Residues 209-229 (YIYYSLDVGIQAATFIALIMM) form a helical membrane-spanning segment. Topologically, residues 230–337 (RFNSFAQLHF…SVFSVLRSVK (108 aa)) are cytoplasmic. Basic and acidic residues predominate over residues 286–299 (NAEAHKDDPLAERE). The tract at residues 286–316 (NAEAHKDDPLAERELSEEESGDSRAVEAAGE) is disordered. The helical transmembrane segment at 338 to 358 (WMFVACGFNFLITLFLFPGIA) threads the bilayer. Topologically, residues 359-361 (TGM) are extracellular. A helical membrane pass occupies residues 362–382 (FPESKWFATVAVFIFNCCDVL). Topologically, residues 383–400 (GRFSSAFRITWPRRYNQR) are cytoplasmic. The helical transmembrane segment at 401–421 (WIIVAASFARVIFVPLLLLHS) threads the bilayer. Residues 422–432 (YHYIPSEAYGY) lie on the Extracellular side of the membrane. The helical transmembrane segment at 433–453 (VMQVVFGLSSGYIASMALVLG) threads the bilayer. At 454–465 (PQSKGIDNDGKR) the chain is on the cytoplasmic side. A helical transmembrane segment spans residues 466-486 (FVAGTLMGISILVGGTIGTVL). At 487–497 (SIMTQTIRETY) the chain is on the extracellular side.

The protein belongs to the SLC29A/ENT transporter (TC 2.A.57) family.

It localises to the cell membrane. The catalysed reaction is adenosine(in) = adenosine(out). It catalyses the reaction hypoxanthine(out) = hypoxanthine(in). It carries out the reaction inosine(in) = inosine(out). The enzyme catalyses uridine(out) = uridine(in). The catalysed reaction is cytidine(in) = cytidine(out). In terms of biological role, nucleoside transporter with broad substrate specificity. Transports adenosine with high affinity. Can also transport hypoxanthine, inosine, uridine and cytidine. The protein is Nucleoside transporter 1 of Crithidia fasciculata.